An 880-amino-acid polypeptide reads, in one-letter code: Translation initiation factor IF-2 (880 aa).

Residues 259–281 are disordered; sequence KNREEARAVGRSSKSQSKRKSST. The region spanning 379–548 is the tr-type G domain; it reads SRAPVVTIMG…LLQAEVLELK (170 aa). The tract at residues 388-395 is G1; sequence GHVDHGKT. Residue 388-395 coordinates GTP; sequence GHVDHGKT. Positions 413–417 are G2; that stretch reads GITQH. A G3 region spans residues 434–437; that stretch reads DTPG. Residues 434 to 438 and 488 to 491 contribute to the GTP site; these read DTPGH and NKID. The tract at residues 488-491 is G4; the sequence is NKID. The segment at 524–526 is G5; the sequence is SAK.

It belongs to the TRAFAC class translation factor GTPase superfamily. Classic translation factor GTPase family. IF-2 subfamily.

It is found in the cytoplasm. Functionally, one of the essential components for the initiation of protein synthesis. Protects formylmethionyl-tRNA from spontaneous hydrolysis and promotes its binding to the 30S ribosomal subunits. Also involved in the hydrolysis of GTP during the formation of the 70S ribosomal complex. In Baumannia cicadellinicola subsp. Homalodisca coagulata, this protein is Translation initiation factor IF-2.